An 821-amino-acid chain; its full sequence is DNA replication licensing factor MCM6 (821 aa).

The residue at position 1 (Met1) is an N-acetylmethionine. 3 positions are modified to phosphoserine: Ser13, Ser219, and Ser271. Thr278 is subject to Phosphothreonine. Residues 346–553 (LYHNLCTSLF…TDYAIARRIV (208 aa)) form the MCM domain. 7 residues coordinate ATP: His359, Ser399, Thr400, Ala401, Lys402, Ser403, and Asn504. Residues 528–531 (SRFD) carry the Arginine finger motif. Positions 619 and 622 each coordinate ADP. Lys643 carries the post-translational modification N6-acetyllysine. The tract at residues 676 to 706 (VDEGPDGINGHADSPAPASGINGHSEDMNQD) is disordered. Residues Ser689 and Ser762 each carry the phosphoserine modification. Thr791 carries the phosphothreonine modification.

This sequence belongs to the MCM family. In terms of assembly, component of the MCM2-7 complex. The complex forms a toroidal hexameric ring with the proposed subunit order MCM2-MCM6-MCM4-MCM7-MCM3-MCM5. Component of the CMG helicase complex, a hexameric ring of related MCM2-7 subunits stabilized by CDC45 and the tetrameric GINS complex. May interact with MCM10. Interacts with TIPIN. Interacts with CDT1. Interacts with MCMBP. Interacts with DDI2. O-glycosylated (O-GlcNAcylated), in a cell cycle-dependent manner.

It is found in the nucleus. Its subcellular location is the chromosome. It catalyses the reaction ATP + H2O = ADP + phosphate + H(+). Functionally, acts as a component of the MCM2-7 complex (MCM complex) which is the replicative helicase essential for 'once per cell cycle' DNA replication initiation and elongation in eukaryotic cells. Core component of CDC45-MCM-GINS (CMG) helicase, the molecular machine that unwinds template DNA during replication, and around which the replisome is built. The active ATPase sites in the MCM2-7 ring are formed through the interaction surfaces of two neighboring subunits such that a critical structure of a conserved arginine finger motif is provided in trans relative to the ATP-binding site of the Walker A box of the adjacent subunit. The six ATPase active sites, however, are likely to contribute differentially to the complex helicase activity. This Bos taurus (Bovine) protein is DNA replication licensing factor MCM6 (MCM6).